We begin with the raw amino-acid sequence, 388 residues long: Na(+)/H(+) antiporter NhaA (388 aa).

The next 11 helical transmembrane spans lie at 14 to 34 (GGIILIIAAVLAMLMANSGFT), 59 to 79 (MLLWINDALMAVFFLLIGLEV), 95 to 115 (AFPVIAAIGGMIVPALLYLAF), 125 to 145 (GWAIPAATDIAFALGVLALLG), 154 to 174 (IFLMALAIIDDLGAIVIIALF), 179 to 199 (LSMVSLGVAAFAIVLLAVLNL), 219 to 239 (VLKSGVHATLAGVIVGFFIPL), 254 to 274 (VLHPWVAYLILPLFAFANAGV), 287 to 307 (ILPLGIIAGLLIGKPLGISLF), 328 to 348 (IMAVGILCGIGFTMSIFIASL), and 356 to 376 (ALINWAKLGILIGSLLSAVIG).

It belongs to the NhaA Na(+)/H(+) (TC 2.A.33) antiporter family.

It is found in the cell inner membrane. The enzyme catalyses Na(+)(in) + 2 H(+)(out) = Na(+)(out) + 2 H(+)(in). In terms of biological role, na(+)/H(+) antiporter that extrudes sodium in exchange for external protons. In Citrobacter koseri (strain ATCC BAA-895 / CDC 4225-83 / SGSC4696), this protein is Na(+)/H(+) antiporter NhaA.